We begin with the raw amino-acid sequence, 208 residues long: Interleukin-6 (208 aa).

The first 27 residues, 1–27 (MTFLSTSAFSPLAFSLGLLLVVATAFP), serve as a signal peptide directing secretion. Residues Cys68 and Cys74 are joined by a disulfide bond. Position 77 is a phosphoserine (Ser77). An intrachain disulfide couples Cys97 to Cys107.

This sequence belongs to the IL-6 superfamily. In terms of assembly, component of a hexamer of two molecules each of IL6, IL6R and IL6ST; first binds to IL6R to associate with the signaling subunit IL6ST. Interacts with IL6R (via the N-terminal ectodomain); this interaction may be affected by IL6R-binding with SORL1, hence decreasing IL6 cis signaling. Interacts with SORL1 (via the N-terminal ectodomain); this interaction leads to IL6 internalization and lysosomal degradation. May form a trimeric complex with the soluble SORL1 ectodomain and soluble IL6R receptor; this interaction might stabilize circulating IL6, hence promoting IL6 trans signaling.

It localises to the secreted. Cytokine with a wide variety of biological functions in immunity, tissue regeneration, and metabolism. Binds to IL6R, then the complex associates to the signaling subunit IL6ST/gp130 to trigger the intracellular IL6-signaling pathway. The interaction with the membrane-bound IL6R and IL6ST stimulates 'classic signaling', whereas the binding of IL6 and soluble IL6R to IL6ST stimulates 'trans-signaling'. Alternatively, 'cluster signaling' occurs when membrane-bound IL6:IL6R complexes on transmitter cells activate IL6ST receptors on neighboring receiver cells. In terms of biological role, IL6 is a potent inducer of the acute phase response. Rapid production of IL6 contributes to host defense during infection and tissue injury, but excessive IL6 synthesis is involved in disease pathology. In the innate immune response, is synthesized by myeloid cells, such as macrophages and dendritic cells, upon recognition of pathogens through toll-like receptors (TLRs) at the site of infection or tissue injury. In the adaptive immune response, is required for the differentiation of B cells into immunoglobulin-secreting cells. Plays a major role in the differentiation of CD4(+) T cell subsets. Essential factor for the development of T follicular helper (Tfh) cells that are required for the induction of germinal-center formation. Required to drive naive CD4(+) T cells to the Th17 lineage. Also required for proliferation of myeloma cells and the survival of plasmablast cells. Functionally, acts as an essential factor in bone homeostasis and on vessels directly or indirectly by induction of VEGF, resulting in increased angiogenesis activity and vascular permeability. Induces, through 'trans-signaling' and synergistically with IL1B and TNF, the production of VEGF. Involved in metabolic controls, is discharged into the bloodstream after muscle contraction increasing lipolysis and improving insulin resistance. 'Trans-signaling' in central nervous system also regulates energy and glucose homeostasis. Mediates, through GLP-1, crosstalk between insulin-sensitive tissues, intestinal L cells and pancreatic islets to adapt to changes in insulin demand. Also acts as a myokine. Plays a protective role during liver injury, being required for maintenance of tissue regeneration. Also has a pivotal role in iron metabolism by regulating HAMP/hepcidin expression upon inflammation or bacterial infection. Through activation of IL6ST-YAP-NOTCH pathway, induces inflammation-induced epithelial regeneration. This Felis catus (Cat) protein is Interleukin-6 (IL6).